A 426-amino-acid chain; its full sequence is DNA damage-binding protein 2 (426 aa).

The span at 1-11 shows a compositional bias: basic and acidic residues; it reads MAPRKRPENQK. Residues 1–33 form a disordered region; that stretch reads MAPRKRPENQKTPEVVVRPKSKRNRSPRELEPE. Position 26 is a phosphoserine (S26). An N6-acetyllysine mark is found at K35 and K76. Required for interaction with DDB1 stretches follow at residues 67-78 and 86-97; these read SIVRALHQHKLG and QQGLQQSFLNSL. WD repeat units lie at residues 115–150, 158–193, 202–237, 243–286, and 289–328; these read SLAW…TFIK, ITGM…LRVF, WFCS…LWNL, KVTH…SLPH, and PVNA…LIPH. Residues 255-273 carry the DWD box motif; the sequence is WLLATASVDQTVKIWDLRQ. A photolesion recognition region spans residues 333–335; sequence FQH. WD repeat units lie at residues 342-385 and 395-419; these read SWHP…MYQL and SLNE…VWSP.

This sequence belongs to the WD repeat DDB2/WDR76 family. Component of the UV-DDB complex which includes DDB1 and DDB2. The UV-DDB complex interacts with monoubiquitinated histone H2A and binds to XPC via the DDB2 subunit. Component of the DCX (DDB1-CUL4-X-box) E3 ubiquitin-protein ligase complex DDB1-CUL4-ROC1 (also known as CUL4-DDB-ROC1 and CUL4-DDB-RBX1), which includes CUL4A or CUL4B, DDB1, DDB2 and RBX1. DDB2 may function as the substrate recognition module within this complex. The DDB1-CUL4-ROC1 complex may associate with the COP9 signalosome, and this inhibits the E3 ubiquitin-protein ligase activity of the complex. A large number of other DCX complexes may also exist in which an alternate substrate targeting subunit replaces DDB2. These targeting subunits are generally known as DCAF (DDB1- and CUL4-associated factor) or CDW (CUL4-DDB1-associated WD40-repeat) proteins. In terms of processing, phosphorylation by ABL1 negatively regulate UV-DDB activity. Ubiquitinated by CUL4A in response to UV irradiation. Ubiquitination appears to both impair DNA-binding and promotes ubiquitin-dependent proteolysis. Degradation of DDB2 at sites of DNA damage may be a prerequisite for their recognition by XPC and subsequent repair. CUL4A-mediated degradation appears to be promoted by ABL1. Post-translationally, ubiquitinated, leading to proteasomal degradation, and deubiquitinated by USP24. Deubiquitinated by USP44; leading to its stabilization on DNA lesions. In terms of processing, acetylated. Deacetylation by SIRT6 in response to UV stress facilitates nucleotide excision repair pathway (the NER pathway) transduction.

The protein resides in the nucleus. The protein localises to the chromosome. It functions in the pathway protein modification; protein ubiquitination. Its function is as follows. Protein, which is both involved in DNA repair and protein ubiquitination, as part of the UV-DDB complex and DCX (DDB1-CUL4-X-box) complexes, respectively. Core component of the UV-DDB complex (UV-damaged DNA-binding protein complex), a complex that recognizes UV-induced DNA damage and recruit proteins of the nucleotide excision repair pathway (the NER pathway) to initiate DNA repair. The UV-DDB complex preferentially binds to cyclobutane pyrimidine dimers (CPD), 6-4 photoproducts (6-4 PP), apurinic sites and short mismatches. Also functions as the substrate recognition module for the DCX (DDB2-CUL4-X-box) E3 ubiquitin-protein ligase complex DDB2-CUL4-ROC1 (also known as CUL4-DDB-ROC1 and CUL4-DDB-RBX1). The DDB2-CUL4-ROC1 complex may ubiquitinate histone H2A, histone H3 and histone H4 at sites of UV-induced DNA damage. The ubiquitination of histones may facilitate their removal from the nucleosome and promote subsequent DNA repair. The DDB2-CUL4-ROC1 complex also ubiquitinates XPC, which may enhance DNA-binding by XPC and promote NER. The DDB2-CUL4-ROC1 complex also ubiquitinates KAT7/HBO1 in response to DNA damage, leading to its degradation: recognizes KAT7/HBO1 following phosphorylation by ATR. This is DNA damage-binding protein 2 (DDB2) from Bos taurus (Bovine).